The primary structure comprises 453 residues: SH2 domain-containing protein 4A (453 aa).

Residues 96-127 adopt a coiled-coil conformation; the sequence is EIIAEQARREAEKEAEQLRKKQEVELSQLSTL. Residues 280 to 301 form a disordered region; sequence AVKRPPIPPKPKLPPSANNSSI. Over residues 284 to 293 the composition is skewed to pro residues; sequence PPIPPKPKLP. Residues 347 to 439 form the SH2 domain; that stretch reads WFHGIISRQE…LGRELLRFPC (93 aa).

It localises to the cytoplasm. Inhibits estrogen-induced cell proliferation. The protein is SH2 domain-containing protein 4A (sh2d4a) of Xenopus tropicalis (Western clawed frog).